Consider the following 61-residue polypeptide: Short neurotoxin 2 (61 aa).

Disulfide bonds link cysteine 3–cysteine 23, cysteine 17–cysteine 40, cysteine 42–cysteine 53, and cysteine 54–cysteine 59.

Belongs to the three-finger toxin family. Short-chain subfamily. Type I alpha-neurotoxin sub-subfamily. In terms of tissue distribution, expressed by the venom gland.

The protein resides in the secreted. Its function is as follows. Binds to muscle nicotinic acetylcholine receptor (nAChR) and inhibit acetylcholine from binding to the receptor, thereby impairing neuromuscular transmission. The chain is Short neurotoxin 2 from Naja annulifera (Banded Egyptian cobra).